A 598-amino-acid polypeptide reads, in one-letter code: Elongation factor 4 (598 aa).

The tr-type G domain maps to 2–184 (KQIRNFSIIA…RLVKEIPAPE (183 aa)). GTP-binding positions include 14–19 (DHGKST) and 131–134 (NKID).

The protein belongs to the TRAFAC class translation factor GTPase superfamily. Classic translation factor GTPase family. LepA subfamily.

It localises to the cell inner membrane. It carries out the reaction GTP + H2O = GDP + phosphate + H(+). Required for accurate and efficient protein synthesis under certain stress conditions. May act as a fidelity factor of the translation reaction, by catalyzing a one-codon backward translocation of tRNAs on improperly translocated ribosomes. Back-translocation proceeds from a post-translocation (POST) complex to a pre-translocation (PRE) complex, thus giving elongation factor G a second chance to translocate the tRNAs correctly. Binds to ribosomes in a GTP-dependent manner. The sequence is that of Elongation factor 4 from Photorhabdus laumondii subsp. laumondii (strain DSM 15139 / CIP 105565 / TT01) (Photorhabdus luminescens subsp. laumondii).